The primary structure comprises 436 residues: Trigger factor (436 aa).

Positions 161–246 constitute a PPIase FKBP-type domain; that stretch reads GDQVNIDFVG…VNSVAAPQLP (86 aa).

It belongs to the FKBP-type PPIase family. Tig subfamily.

It is found in the cytoplasm. The enzyme catalyses [protein]-peptidylproline (omega=180) = [protein]-peptidylproline (omega=0). Involved in protein export. Acts as a chaperone by maintaining the newly synthesized protein in an open conformation. Functions as a peptidyl-prolyl cis-trans isomerase. This chain is Trigger factor, found in Stutzerimonas stutzeri (strain A1501) (Pseudomonas stutzeri).